Consider the following 378-residue polypeptide: Dual-specificity RNA methyltransferase RlmN (378 aa).

The active-site Proton acceptor is the Glu-96. The region spanning 102 to 342 is the Radical SAM core domain; sequence QGGRGTLCVS…VRTTRGDDID (241 aa). An intrachain disulfide couples Cys-109 to Cys-345. Residues Cys-116, Cys-120, and Cys-123 each contribute to the [4Fe-4S] cluster site. S-adenosyl-L-methionine is bound by residues 170–171, Ser-202, 224–226, and Asn-302; these read GE and SLH. The active-site S-methylcysteine intermediate is Cys-345.

The protein belongs to the radical SAM superfamily. RlmN family. The cofactor is [4Fe-4S] cluster.

The protein localises to the cytoplasm. The catalysed reaction is adenosine(2503) in 23S rRNA + 2 reduced [2Fe-2S]-[ferredoxin] + 2 S-adenosyl-L-methionine = 2-methyladenosine(2503) in 23S rRNA + 5'-deoxyadenosine + L-methionine + 2 oxidized [2Fe-2S]-[ferredoxin] + S-adenosyl-L-homocysteine. It carries out the reaction adenosine(37) in tRNA + 2 reduced [2Fe-2S]-[ferredoxin] + 2 S-adenosyl-L-methionine = 2-methyladenosine(37) in tRNA + 5'-deoxyadenosine + L-methionine + 2 oxidized [2Fe-2S]-[ferredoxin] + S-adenosyl-L-homocysteine. In terms of biological role, specifically methylates position 2 of adenine 2503 in 23S rRNA and position 2 of adenine 37 in tRNAs. m2A2503 modification seems to play a crucial role in the proofreading step occurring at the peptidyl transferase center and thus would serve to optimize ribosomal fidelity. This chain is Dual-specificity RNA methyltransferase RlmN, found in Pseudomonas paraeruginosa (strain DSM 24068 / PA7) (Pseudomonas aeruginosa (strain PA7)).